Consider the following 607-residue polypeptide: Fatty acid amide hydrolase (607 aa).

Catalysis depends on charge relay system residues K205 and S281. Substrate is bound at residue 302-305 (GGGS). S305 acts as the Acyl-ester intermediate in catalysis.

It belongs to the amidase family. As to quaternary structure, forms homodimers. As to expression, expressed in roots, leaves and flowers. Expressed in seedlings, flowers, roots, siliques, seeds and leaves.

It is found in the endoplasmic reticulum membrane. The protein localises to the cell membrane. It catalyses the reaction N-(5Z,8Z,11Z,14Z-eicosatetraenoyl)-ethanolamine + H2O = ethanolamine + (5Z,8Z,11Z,14Z)-eicosatetraenoate. It carries out the reaction N-(9Z,12Z-octadecadienoyl)-ethanolamine + H2O = ethanolamine + (9Z,12Z)-octadecadienoate. The enzyme catalyses N-hexadecanoylethanolamine + H2O = ethanolamine + hexadecanoate. The catalysed reaction is N-tetradecanoylethanolamine + H2O = tetradecanoate + ethanolamine. It catalyses the reaction N-dodecanoylethanolamine + H2O = dodecanoate + ethanolamine. Inhibited by methyl arachidonyl fluorophosphonate (MAFP). Functionally, catalyzes the hydrolysis of bioactive endogenous fatty acid amides to their corresponding acids. The hydrolysis of endogenous amidated lipids terminates their participation as lipid mediators in various signaling systems. Converts a wide range of N-acylethanolamines (NAEs) to their corresponding free fatty acids and ethanolamine. Can use oleamide as substrate, but not indole-3-acetamide, 1-naphtalene-acetamide, nicotinic acid amide or L-asparagine. Can use 2-arachidonylglycerol as substrate. Participates in the regulation of plant growth. Hydrolyzes N-dodecanoylethanolamine, which is has a growth inhibitory effect on seedling growth. Involved in plant defense signaling. Involved in abscisic acid (ABA) signaling through mechanisms that are independent of the catalytic activity. Involved in the regulation of flowering time. Catalyzes the hydrolysis of N-acyl L-homoserine lactones (AHLs), which are a class of signaling molecules produced by bacteria for quorum sensing. Accumulation of L-homoserine appears to encourage plant growth at low concentrations by stimulating transpiration, but higher concentrations inhibit growth by stimulating ethylene production. This is Fatty acid amide hydrolase from Arabidopsis thaliana (Mouse-ear cress).